A 322-amino-acid chain; its full sequence is Phosphatidylglycerol--prolipoprotein diacylglyceryl transferase (322 aa).

The next 4 membrane-spanning stretches (helical) occupy residues 21–41 (PLPIRAYAMCIIAGIIVAIWL), 50–70 (GGNPEVVLDAAIVAVPAGIIG), 98–118 (NGGLGIWGAVILGGLAVWAYF), and 123–143 (IPLAPFADAVAPGVILAQAIG). R144 contacts a 1,2-diacyl-sn-glycero-3-phospho-(1'-sn-glycerol). Transmembrane regions (helical) follow at residues 191 to 211 (VHPTFLYEMLWNLLIFGLLIW) and 254 to 274 (INTLVSAVVFILAVIVFLRLG). The disordered stretch occupies residues 283–322 (VDPAYHAAQAERDDTETAGLDATTGTVPGDSPETTGKKRK).

Belongs to the Lgt family.

The protein resides in the cell membrane. The catalysed reaction is L-cysteinyl-[prolipoprotein] + a 1,2-diacyl-sn-glycero-3-phospho-(1'-sn-glycerol) = an S-1,2-diacyl-sn-glyceryl-L-cysteinyl-[prolipoprotein] + sn-glycerol 1-phosphate + H(+). Its pathway is protein modification; lipoprotein biosynthesis (diacylglyceryl transfer). Catalyzes the transfer of the diacylglyceryl group from phosphatidylglycerol to the sulfhydryl group of the N-terminal cysteine of a prolipoprotein, the first step in the formation of mature lipoproteins. This is Phosphatidylglycerol--prolipoprotein diacylglyceryl transferase from Corynebacterium efficiens (strain DSM 44549 / YS-314 / AJ 12310 / JCM 11189 / NBRC 100395).